A 249-amino-acid polypeptide reads, in one-letter code: Uridylate kinase (249 aa).

Position 21–24 (21–24 (KLSG)) interacts with ATP. Position 63 (glycine 63) interacts with UMP. Residues glycine 64 and arginine 68 each coordinate ATP. Residues aspartate 84 and 145–152 (TGNPFVTT) each bind UMP. Residues threonine 172, tyrosine 178, and aspartate 181 each contribute to the ATP site.

It belongs to the UMP kinase family. Homohexamer.

Its subcellular location is the cytoplasm. The enzyme catalyses UMP + ATP = UDP + ADP. Its pathway is pyrimidine metabolism; CTP biosynthesis via de novo pathway; UDP from UMP (UMPK route): step 1/1. Its activity is regulated as follows. Inhibited by UTP. Its function is as follows. Catalyzes the reversible phosphorylation of UMP to UDP. The sequence is that of Uridylate kinase from Francisella tularensis subsp. holarctica (strain FTNF002-00 / FTA).